Consider the following 416-residue polypeptide: D-amino acid dehydrogenase 2 (416 aa).

An FAD-binding site is contributed by 3-17; sequence ITVLGAGVVGTAAAY.

Belongs to the DadA oxidoreductase family. Requires FAD as cofactor.

The catalysed reaction is a D-alpha-amino acid + A + H2O = a 2-oxocarboxylate + AH2 + NH4(+). Oxidative deamination of D-amino acids. This chain is D-amino acid dehydrogenase 2 (dadA2), found in Mesorhizobium japonicum (strain LMG 29417 / CECT 9101 / MAFF 303099) (Mesorhizobium loti (strain MAFF 303099)).